The sequence spans 438 residues: Na(+)/H(+) antiporter NhaA (438 aa).

11 consecutive transmembrane segments (helical) span residues 23 to 43 (FGGI…NSFL), 62 to 82 (FFIG…LFFL), 104 to 124 (SFPV…YFFL), 133 to 153 (GFGI…MLLG), 162 to 182 (VFLI…IALF), 185 to 205 (TNLK…LAVL), 221 to 241 (VLLW…AVIL), 302 to 322 (FLAP…NAGV), 337 to 357 (LGVI…ITFI), 372 to 392 (WWHI…SMFI), and 410 to 430 (IAIL…LFAL).

Belongs to the NhaA Na(+)/H(+) (TC 2.A.33) antiporter family.

It is found in the cell inner membrane. It catalyses the reaction Na(+)(in) + 2 H(+)(out) = Na(+)(out) + 2 H(+)(in). Its function is as follows. Na(+)/H(+) antiporter that extrudes sodium in exchange for external protons. In Helicobacter pylori (strain ATCC 700392 / 26695) (Campylobacter pylori), this protein is Na(+)/H(+) antiporter NhaA.